Consider the following 198-residue polypeptide: Thymidylate kinase (198 aa).

10–17 is a binding site for ATP; that stretch reads GLDGSGKT.

Belongs to the thymidylate kinase family.

It catalyses the reaction dTMP + ATP = dTDP + ADP. In terms of biological role, phosphorylation of dTMP to form dTDP in both de novo and salvage pathways of dTTP synthesis. This is Thymidylate kinase from Thermus thermophilus (strain ATCC BAA-163 / DSM 7039 / HB27).